The sequence spans 306 residues: Bifunctional protein FolD (306 aa).

NADP(+) is bound by residues 169 to 171 (GRS), Ser194, and Ile235.

This sequence belongs to the tetrahydrofolate dehydrogenase/cyclohydrolase family. As to quaternary structure, homodimer.

The enzyme catalyses (6R)-5,10-methylene-5,6,7,8-tetrahydrofolate + NADP(+) = (6R)-5,10-methenyltetrahydrofolate + NADPH. It carries out the reaction (6R)-5,10-methenyltetrahydrofolate + H2O = (6R)-10-formyltetrahydrofolate + H(+). Its pathway is one-carbon metabolism; tetrahydrofolate interconversion. Catalyzes the oxidation of 5,10-methylenetetrahydrofolate to 5,10-methenyltetrahydrofolate and then the hydrolysis of 5,10-methenyltetrahydrofolate to 10-formyltetrahydrofolate. This Thermosynechococcus vestitus (strain NIES-2133 / IAM M-273 / BP-1) protein is Bifunctional protein FolD.